The chain runs to 421 residues: RNA exonuclease 4 (421 aa).

Disordered stretches follow at residues 1-51 and 79-179; these read MAKA…ETKK and ENQA…QPPK. Polar residues predominate over residues 11–24; it reads SPCSGSLGKTANTP. Over residues 25-36 the composition is skewed to basic residues; the sequence is KQKRKQKQRKFW. 3 stretches are compositionally biased toward basic and acidic residues: residues 92 to 107, 140 to 149, and 161 to 170; these read PKKDQKVSEKKTEESV, AAEKSDEVSK, and DTEHQGKKPQ. Residues 234 to 385 enclose the Exonuclease domain; sequence TVAMDCEMVG…QDAQAAMRLY (152 aa).

It belongs to the REXO4 family.

Its subcellular location is the nucleus. This Xenopus laevis (African clawed frog) protein is RNA exonuclease 4 (rexo4).